A 161-amino-acid polypeptide reads, in one-letter code: Nucleotide-binding protein Gmet_3206 (161 aa).

Belongs to the YajQ family.

Its function is as follows. Nucleotide-binding protein. This is Nucleotide-binding protein Gmet_3206 from Geobacter metallireducens (strain ATCC 53774 / DSM 7210 / GS-15).